The sequence spans 500 residues: Cytochrome P450 11B1, mitochondrial (500 aa).

The transit peptide at 1–24 directs the protein to the mitochondrion; the sequence is MAFRLKSDVRLAGSWLCLRGARAL. Cys447 is a binding site for heme.

This sequence belongs to the cytochrome P450 family. Heme is required as a cofactor.

Its subcellular location is the mitochondrion inner membrane. The catalysed reaction is a steroid + 2 reduced [adrenodoxin] + O2 + 2 H(+) = an 11beta-hydroxysteroid + 2 oxidized [adrenodoxin] + H2O. The enzyme catalyses 11-deoxycortisol + 2 reduced [adrenodoxin] + O2 + 2 H(+) = cortisol + 2 oxidized [adrenodoxin] + H2O. It catalyses the reaction 21-hydroxyprogesterone + 2 reduced [adrenodoxin] + O2 + 2 H(+) = corticosterone + 2 oxidized [adrenodoxin] + H2O. It carries out the reaction 21-hydroxyprogesterone + 2 reduced [adrenodoxin] + O2 + 2 H(+) = 18-hydroxy-11-deoxycorticosterone + 2 oxidized [adrenodoxin] + H2O. The catalysed reaction is 21-hydroxyprogesterone + 2 reduced [adrenodoxin] + O2 + 2 H(+) = 19-hydroxy-11-deoxycorticosterone + 2 oxidized [adrenodoxin] + H2O. The enzyme catalyses cortisol + 2 reduced [adrenodoxin] + O2 + 2 H(+) = 18-hydroxycortisol + 2 oxidized [adrenodoxin] + H2O. It catalyses the reaction 11-deoxycortisol + 2 reduced [adrenodoxin] + O2 + 2 H(+) = 18-hydroxy-11-deoxycortisol + 2 oxidized [adrenodoxin] + H2O. Its pathway is steroid biosynthesis; glucocorticoid biosynthesis. It functions in the pathway steroid hormone biosynthesis. Its function is as follows. A cytochrome P450 monooxygenase involved in the biosynthesis of adrenal corticoids. Catalyzes a variety of reactions that are essential for many species, including detoxification, defense, and the formation of endogenous chemicals like steroid hormones. Steroid 11beta, 18- and 19-hydroxylase with preferred regioselectivity at 11beta, then 18, and lastly 19. Catalyzes the hydroxylation of 11-deoxycortisol and 11-deoxycorticosterone (21-hydroxyprogesterone) at 11beta position, yielding cortisol or corticosterone, respectively, but cannot produce aldosterone. Mechanistically, uses molecular oxygen inserting one oxygen atom into a substrate for hydroxylation and reducing the second into a water molecule. Two electrons are provided by NADPH via a two-protein mitochondrial transfer system comprising flavoprotein FDXR (adrenodoxin/ferredoxin reductase) and nonheme iron-sulfur protein FDX1 or FDX2 (adrenodoxin/ferredoxin). Due to its lack of 18-oxidation activity, it is incapable of generating aldosterone. Could also be involved in the androgen metabolic pathway. In Cavia porcellus (Guinea pig), this protein is Cytochrome P450 11B1, mitochondrial (CYP11B1).